Reading from the N-terminus, the 80-residue chain is Exodeoxyribonuclease 7 small subunit (80 aa).

The protein belongs to the XseB family. As to quaternary structure, heterooligomer composed of large and small subunits.

It localises to the cytoplasm. It carries out the reaction Exonucleolytic cleavage in either 5'- to 3'- or 3'- to 5'-direction to yield nucleoside 5'-phosphates.. Its function is as follows. Bidirectionally degrades single-stranded DNA into large acid-insoluble oligonucleotides, which are then degraded further into small acid-soluble oligonucleotides. The protein is Exodeoxyribonuclease 7 small subunit of Erwinia tasmaniensis (strain DSM 17950 / CFBP 7177 / CIP 109463 / NCPPB 4357 / Et1/99).